Here is an 83-residue protein sequence, read N- to C-terminus: Large ribosomal subunit protein eL37 (83 aa).

4 residues coordinate Zn(2+): Cys19, Cys22, Cys34, and Cys37. The C4-type zinc finger occupies 19–37; that stretch reads CRRCGRNSYHVQWERCAAC.

This sequence belongs to the eukaryotic ribosomal protein eL37 family. It depends on Zn(2+) as a cofactor.

Binds to the 23S rRNA. The sequence is that of Large ribosomal subunit protein eL37 (RPL37) from Leishmania donovani.